A 35-amino-acid chain; its full sequence is Tamulustoxin-2 (35 aa).

3 disulfides stabilise this stretch: Cys2/Cys22, Cys7/Cys31, and Cys11/Cys33.

It belongs to the short scorpion toxin superfamily. Potassium channel inhibitor family. Expressed by the venom gland.

It localises to the secreted. Blocks Kv1.6/KCNA6 potassium channels. The polypeptide is Tamulustoxin-2 (Hottentotta tamulus (Eastern Indian scorpion)).